Consider the following 533-residue polypeptide: Probable polyamine oxidase 5 (533 aa).

FAD-binding residues include glutamate 37, arginine 45, valine 262, and glutamate 501.

This sequence belongs to the flavin monoamine oxidase family. Requires FAD as cofactor. In terms of tissue distribution, expressed in root vasculature, leaves and stems.

It localises to the cytoplasm. It catalyses the reaction spermine + O2 + H2O = 3-aminopropanal + spermidine + H2O2. It carries out the reaction N(1)-acetylspermine + O2 + H2O = 3-acetamidopropanal + spermidine + H2O2. The catalysed reaction is norspermine + O2 + H2O = norspermidine + 3-aminopropanal + H2O2. The enzyme catalyses thermospermine + O2 + H2O = 3-aminopropanal + spermidine + H2O2. Its pathway is amine and polyamine degradation; spermine degradation. Functionally, flavoenzyme involved in polyamine back-conversion. Catalyzes the oxidation of the secondary amino group of polyamines, such as spermine and its acetyl derivatives. Substrate preference is spermine &gt; N(1)-acetylspermine &gt; thermospermine &gt; norspermine. Plays an important role in the regulation of polyamine intracellular concentration. Involved in xylem differentiation by controlling thermospermine homeostasis, and participating in the tightly controlled interplay between auxin and cytokinin that is necessary for proper xylem differentiation. Involved in the production of hydrogen peroxide in response to salt and cold stresses. This Arabidopsis thaliana (Mouse-ear cress) protein is Probable polyamine oxidase 5.